The following is a 175-amino-acid chain: NADH-ubiquinone oxidoreductase chain 6 (175 aa).

Helical transmembrane passes span 1–21, 25–45, 47–67, 88–108, and 149–169; these read MMIY…VGFS, SPIY…GIVM, FGGS…MLVV, TVLS…LYMF, and YGVW…LVVL.

It belongs to the complex I subunit 6 family. As to quaternary structure, core subunit of respiratory chain NADH dehydrogenase (Complex I) which is composed of 45 different subunits.

It is found in the mitochondrion inner membrane. The catalysed reaction is a ubiquinone + NADH + 5 H(+)(in) = a ubiquinol + NAD(+) + 4 H(+)(out). Its function is as follows. Core subunit of the mitochondrial membrane respiratory chain NADH dehydrogenase (Complex I) which catalyzes electron transfer from NADH through the respiratory chain, using ubiquinone as an electron acceptor. Essential for the catalytic activity and assembly of complex I. This chain is NADH-ubiquinone oxidoreductase chain 6 (MT-ND6), found in Rhinoceros unicornis (Greater Indian rhinoceros).